A 203-amino-acid chain; its full sequence is Pyridoxine/pyridoxamine 5'-phosphate oxidase (203 aa).

Residues 50–55 (RMVLLK), 65–66 (YT), lysine 72, and glutamine 94 each bind FMN. Residue lysine 55 participates in substrate binding. 3 residues coordinate substrate: tyrosine 112, arginine 116, and serine 120. FMN is bound by residues 129-130 (QS) and tryptophan 174. 180 to 182 (RLH) provides a ligand contact to substrate. Position 184 (arginine 184) interacts with FMN.

It belongs to the pyridoxamine 5'-phosphate oxidase family. Homodimer. Requires FMN as cofactor.

It carries out the reaction pyridoxamine 5'-phosphate + O2 + H2O = pyridoxal 5'-phosphate + H2O2 + NH4(+). The catalysed reaction is pyridoxine 5'-phosphate + O2 = pyridoxal 5'-phosphate + H2O2. Its pathway is cofactor metabolism; pyridoxal 5'-phosphate salvage; pyridoxal 5'-phosphate from pyridoxamine 5'-phosphate: step 1/1. The protein operates within cofactor metabolism; pyridoxal 5'-phosphate salvage; pyridoxal 5'-phosphate from pyridoxine 5'-phosphate: step 1/1. Functionally, catalyzes the oxidation of either pyridoxine 5'-phosphate (PNP) or pyridoxamine 5'-phosphate (PMP) into pyridoxal 5'-phosphate (PLP). The protein is Pyridoxine/pyridoxamine 5'-phosphate oxidase of Brucella anthropi (strain ATCC 49188 / DSM 6882 / CCUG 24695 / JCM 21032 / LMG 3331 / NBRC 15819 / NCTC 12168 / Alc 37) (Ochrobactrum anthropi).